Reading from the N-terminus, the 215-residue chain is GTP-binding nuclear protein Ran (215 aa).

In terms of domain architecture, Small GTPase Ran-type spans 6 to 170; the sequence is DIPTFKLVLV…LWLVRKLLGD (165 aa). GTP is bound by residues 17–24, 35–41, glycine 67, 121–124, and 149–151; these read DGGTGKTT, EKKYVAT, NFVD, and SAK. A switch-I region spans residues 36–44; that stretch reads KKYVATLGV. Residues 67 to 83 are switch-II; the sequence is GQEKFGGLRDGYYIQGQ. Residues 210–215 are interaction with RANBP1; that stretch reads DDDEDL.

Belongs to the small GTPase superfamily. Ran family. Monomer. Interacts with RANGAP1, which promotes RAN-mediated GTP hydrolysis. Interacts with KPNB1. Interaction with KPNB1 inhibits RANGAP1-mediated stimulation of GTPase activity. Interacts with RCC1 which promotes the exchange of RAN-bound GDP by GTP. Interaction with KPNB1 inhibits RCC1-mediated exchange of RAN-bound GDP by GTP. Interacts (GTP-bound form) with TNPO1; the interaction is direct. Interacts with KPNB1 and with TNPO1; both inhibit RAN GTPase activity. Interacts (via C-terminus) with RANBP1, which alleviates the inhibition of RAN GTPase activity. Interacts with RANGRF, which promotes the release of bound guanine nucleotide. RANGRF and RCC1 compete for an overlapping binding site on RAN. Identified in a complex with KPNA2 and CSE1L; interaction with RANBP1 mediates dissociation of RAN from this complex. Interaction with both RANBP1 and KPNA2 promotes dissociation of the complex between RAN and KPNB1. Identified in a complex composed of RAN, RANGAP1 and RANBP1. Identified in a complex that contains TNPO1, RAN and RANBP1. Identified in a nuclear export complex with XPO1. Interaction with RANBP1 or RANBP2 induces a conformation change in the complex formed by XPO1 and RAN that triggers the release of the nuclear export signal of cargo proteins. Component of a nuclear export receptor complex composed of KPNB1, RAN, SNUPN and XPO1. Mg(2+) is required as a cofactor.

The protein localises to the nucleus. The protein resides in the nucleus envelope. Its subcellular location is the cytoplasm. It is found in the cytosol. In terms of biological role, GTPase involved in nucleocytoplasmic transport, participating both to the import and the export from the nucleus of proteins and RNAs. Switches between a cytoplasmic GDP- and a nuclear GTP-bound state by nucleotide exchange and GTP hydrolysis. Nuclear import receptors such as importin beta bind their substrates only in the absence of GTP-bound RAN and release them upon direct interaction with GTP-bound RAN, while export receptors behave in the opposite way. Thereby, RAN controls cargo loading and release by transport receptors in the proper compartment and ensures the directionality of the transport. Interaction with RANBP1 induces a conformation change in the complex formed by XPO1 and RAN that triggers the release of the nuclear export signal of cargo proteins. RAN (GTP-bound form) triggers microtubule assembly at mitotic chromosomes and is required for normal mitotic spindle assembly and chromosome segregation. Required for normal progress through mitosis. This chain is GTP-binding nuclear protein Ran (ran-1), found in Onchocerca volvulus.